We begin with the raw amino-acid sequence, 244 residues long: uncharacterized protein (244 aa).

The GP-PDE domain maps to 5–244 (QLLLAHRGYS…ANKKFEIKIN (240 aa)).

This sequence to glycerophosphoryl diester phosphodiesterases (EC 3.1.4.46). It to M.genitalium MG385.

This is an uncharacterized protein from Mycoplasma genitalium (strain ATCC 33530 / DSM 19775 / NCTC 10195 / G37) (Mycoplasmoides genitalium).